Consider the following 502-residue polypeptide: Ribose import ATP-binding protein RbsA (502 aa).

2 consecutive ABC transporter domains span residues 3–239 and 249–493; these read VTMR…VGRE and AAPG…TGGA. Residue 35-42 participates in ATP binding; the sequence is GENGAGKS.

It belongs to the ABC transporter superfamily. Ribose importer (TC 3.A.1.2.1) family. The complex is composed of an ATP-binding protein (RbsA), two transmembrane proteins (RbsC) and a solute-binding protein (RbsB).

It is found in the cell inner membrane. It carries out the reaction D-ribose(out) + ATP + H2O = D-ribose(in) + ADP + phosphate + H(+). Part of the ABC transporter complex RbsABC involved in ribose import. Responsible for energy coupling to the transport system. This chain is Ribose import ATP-binding protein RbsA, found in Chromobacterium violaceum (strain ATCC 12472 / DSM 30191 / JCM 1249 / CCUG 213 / NBRC 12614 / NCIMB 9131 / NCTC 9757 / MK).